The following is a 718-amino-acid chain: K(+)-insensitive pyrophosphate-energized proton pump (718 aa).

6 helical membrane-spanning segments follow: residues 6–26 (AVLVLVIACGVVSVLFAIWAI), 54–76 (LTRQYSTIAIVGVVVFLAAWYLL), 81–103 (AIGFLIGAVLSGVTGFIGMHVSV), 112–132 (AASLSLAGGLELAFKSGAITG), 133–153 (LLVAGLALLGVSVYYFILTVW), and 168–188 (VSLGFGASLISIFARLGGGIF). A substrate-binding site is contributed by lysine 190. The Mg(2+) site is built by aspartate 193, aspartate 197, asparagine 220, and aspartate 223. The next 6 membrane-spanning stretches (helical) occupy residues 240-260 (AVTVVATMVLGAIFFNGSDIL), 265-285 (LYPLMICGACVITSIVGTFFV), 300-320 (GLIATGLLSIVGLAIANTLTV), 335-355 (GTNLFLCGLIGLIVTGLIVVI), 385-405 (GLAVSLESTALPAIVIVGGII), and 413-433 (LFGTAIAVTAMLGIAGMIVAL). Aspartate 441 is a Mg(2+) binding site. 4 consecutive transmembrane segments (helical) span residues 472–492 (AVTKGYAIGSAGLGALVLFAA), 524–544 (YVVAGLIFGGLIPYLFGGMAM), 593–613 (IIPSLLPVLAPIVVYFGVLLI), and 620–640 (AFAALGASLLGVIVNGLFVAI). The Ca(2+) site is built by aspartate 650, aspartate 682, and aspartate 686. Lysine 689 lines the substrate pocket. Residues 695–715 (AVNPAIKITNIVALLLLAVLA) traverse the membrane as a helical segment.

The protein belongs to the H(+)-translocating pyrophosphatase (TC 3.A.10) family. K(+)-insensitive subfamily. Homodimer. It depends on Mg(2+) as a cofactor.

The protein localises to the cell inner membrane. It carries out the reaction diphosphate + H2O + H(+)(in) = 2 phosphate + 2 H(+)(out). Proton pump that utilizes the energy of pyrophosphate hydrolysis as the driving force for proton movement across the membrane. Generates a proton motive force. This Brucella anthropi (strain ATCC 49188 / DSM 6882 / CCUG 24695 / JCM 21032 / LMG 3331 / NBRC 15819 / NCTC 12168 / Alc 37) (Ochrobactrum anthropi) protein is K(+)-insensitive pyrophosphate-energized proton pump.